A 430-amino-acid chain; its full sequence is S-adenosylmethionine synthase (430 aa).

His-14 contacts ATP. Asp-16 contributes to the Mg(2+) binding site. Glu-42 contacts K(+). L-methionine is bound by residues Glu-55 and Gln-98. Positions 98 to 108 (QSADINRGVER) are flexible loop. ATP is bound by residues 164–166 (DAK), 254–255 (KF), Asp-263, 269–270 (RK), Ala-286, and Lys-290. Asp-263 is an L-methionine binding site. Lys-294 lines the L-methionine pocket.

The protein belongs to the AdoMet synthase family. In terms of assembly, homotetramer; dimer of dimers. The cofactor is Mg(2+). K(+) is required as a cofactor.

It localises to the cytoplasm. The catalysed reaction is L-methionine + ATP + H2O = S-adenosyl-L-methionine + phosphate + diphosphate. It participates in amino-acid biosynthesis; S-adenosyl-L-methionine biosynthesis; S-adenosyl-L-methionine from L-methionine: step 1/1. In terms of biological role, catalyzes the formation of S-adenosylmethionine (AdoMet) from methionine and ATP. The overall synthetic reaction is composed of two sequential steps, AdoMet formation and the subsequent tripolyphosphate hydrolysis which occurs prior to release of AdoMet from the enzyme. This Bacteroides fragilis (strain ATCC 25285 / DSM 2151 / CCUG 4856 / JCM 11019 / LMG 10263 / NCTC 9343 / Onslow / VPI 2553 / EN-2) protein is S-adenosylmethionine synthase.